Consider the following 391-residue polypeptide: GTPase Obg (391 aa).

Residues 1–159 (MKFVDEARIL…RELMLELMLL (159 aa)) enclose the Obg domain. Positions 160–333 (ADVGMLGMPN…LCWDIMEFMK (174 aa)) constitute an OBG-type G domain. GTP contacts are provided by residues 166–173 (GMPNAGKS), 191–195 (FTTLV), 213–216 (DIPG), 283–286 (NKVD), and 314–316 (SAI). Residues serine 173 and threonine 193 each coordinate Mg(2+).

This sequence belongs to the TRAFAC class OBG-HflX-like GTPase superfamily. OBG GTPase family. In terms of assembly, monomer. The cofactor is Mg(2+).

The protein localises to the cytoplasm. An essential GTPase which binds GTP, GDP and possibly (p)ppGpp with moderate affinity, with high nucleotide exchange rates and a fairly low GTP hydrolysis rate. Plays a role in control of the cell cycle, stress response, ribosome biogenesis and in those bacteria that undergo differentiation, in morphogenesis control. The sequence is that of GTPase Obg from Photorhabdus laumondii subsp. laumondii (strain DSM 15139 / CIP 105565 / TT01) (Photorhabdus luminescens subsp. laumondii).